The chain runs to 415 residues: Secernin-2 (415 aa).

Residue Cys8 is part of the active site.

This sequence belongs to the peptidase C69 family. Secernin subfamily.

The protein is Secernin-2 (scrn2) of Danio rerio (Zebrafish).